The chain runs to 195 residues: L-rhamnose-binding lectin CSL3 (195 aa).

SUEL-type lectin domains lie at 1-95 and 105-195; these read AISI…YSCV and ICEG…YTCD.

L-rhamnose binding lectin. Has hemagglutinating activity towards rabbit erythrocytes, human type A erythrocytes, human type B erythrocytes, human type O erythrocytes and sheep erythrocytes. Hemagglutinating activity is inhibited by smooth-type lipopolysaccharide (LPS) from S.flexneri 1A, A.salmonicida and E.coli K12, but not by rough-type LPS from S.flexneri, E.coli K12 and E.coli EH100. Agglutinates E.coli K12 and B.subtilis. This is L-rhamnose-binding lectin CSL3 from Oncorhynchus keta (Chum salmon).